The primary structure comprises 338 residues: Thiosulfate-binding protein (338 aa).

Positions 1-25 are cleaved as a signal peptide; it reads MAVNLLKKNSLALVASLLLAGHVQA.

The protein belongs to the prokaryotic sulfate-binding protein family. As to quaternary structure, the complex is composed of two ATP-binding proteins (CysA), two transmembrane proteins (CysT and CysW) and a solute-binding protein (CysP).

It localises to the periplasm. Functionally, part of the ABC transporter complex CysAWTP (TC 3.A.1.6.1) involved in sulfate/thiosulfate import. This protein specifically binds thiosulfate and is involved in its transmembrane transport. This chain is Thiosulfate-binding protein (cysP), found in Escherichia coli (strain K12).